A 426-amino-acid chain; its full sequence is Glutamate-1-semialdehyde 2,1-aminomutase (426 aa).

At Lys265 the chain carries N6-(pyridoxal phosphate)lysine.

This sequence belongs to the class-III pyridoxal-phosphate-dependent aminotransferase family. HemL subfamily. As to quaternary structure, homodimer. It depends on pyridoxal 5'-phosphate as a cofactor.

The protein localises to the cytoplasm. The catalysed reaction is (S)-4-amino-5-oxopentanoate = 5-aminolevulinate. The protein operates within porphyrin-containing compound metabolism; protoporphyrin-IX biosynthesis; 5-aminolevulinate from L-glutamyl-tRNA(Glu): step 2/2. This chain is Glutamate-1-semialdehyde 2,1-aminomutase, found in Escherichia coli O139:H28 (strain E24377A / ETEC).